A 129-amino-acid polypeptide reads, in one-letter code: Glycine cleavage system H protein (129 aa).

The 83-residue stretch at 24–106 (TYTVGITEHA…YTGGWIFKIK (83 aa)) folds into the Lipoyl-binding domain. An N6-lipoyllysine modification is found at Lys65.

The protein belongs to the GcvH family. As to quaternary structure, the glycine cleavage system is composed of four proteins: P, T, L and H. (R)-lipoate is required as a cofactor.

Its function is as follows. The glycine cleavage system catalyzes the degradation of glycine. The H protein shuttles the methylamine group of glycine from the P protein to the T protein. This Salmonella choleraesuis (strain SC-B67) protein is Glycine cleavage system H protein.